A 48-amino-acid polypeptide reads, in one-letter code: Large ribosomal subunit protein bL32 (48 aa).

A compositionally biased stretch (basic residues) spans 1–20; it reads MAVPKRRVSKTRAAKRRTHY. Residues 1-48 are disordered; that stretch reads MAVPKRRVSKTRAAKRRTHYKVSLPIPVKDKDGSWKLPHRINTKTGEY.

Belongs to the bacterial ribosomal protein bL32 family.

This chain is Large ribosomal subunit protein bL32, found in Campylobacter hominis (strain ATCC BAA-381 / DSM 21671 / CCUG 45161 / LMG 19568 / NCTC 13146 / CH001A).